The sequence spans 158 residues: Small ribosomal subunit protein uS13 (158 aa).

It belongs to the universal ribosomal protein uS13 family. As to quaternary structure, part of the 30S ribosomal subunit. Forms a loose heterodimer with protein S19. Forms two bridges to the 50S subunit in the 70S ribosome.

Functionally, located at the top of the head of the 30S subunit, it contacts several helices of the 16S rRNA. In the 70S ribosome it contacts the 23S rRNA (bridge B1a) and protein L5 of the 50S subunit (bridge B1b), connecting the 2 subunits; these bridges are implicated in subunit movement. The polypeptide is Small ribosomal subunit protein uS13 (Picrophilus torridus (strain ATCC 700027 / DSM 9790 / JCM 10055 / NBRC 100828 / KAW 2/3)).